Reading from the N-terminus, the 248-residue chain is Probable transcriptional regulatory protein RPE_4771 (248 aa).

Residues 1 to 21 form a disordered region; the sequence is MAGHSQFKNIMHRKGRQDAQK.

It belongs to the TACO1 family.

The protein resides in the cytoplasm. The polypeptide is Probable transcriptional regulatory protein RPE_4771 (Rhodopseudomonas palustris (strain BisA53)).